A 228-amino-acid chain; its full sequence is GDT1-like protein 5 (228 aa).

Gly-2 is subject to N-acetylglycine. Transmembrane regions (helical) follow at residues Leu-12–Ala-32, Leu-39–Gly-59, Thr-71–Phe-91, Pro-133–Gly-153, Leu-173–Gly-193, and Ile-205–Pro-225.

This sequence belongs to the GDT1 family.

It localises to the membrane. In Arabidopsis thaliana (Mouse-ear cress), this protein is GDT1-like protein 5.